A 332-amino-acid chain; its full sequence is Cysteine and histidine-rich domain-containing protein 1 (332 aa).

Alanine 2 bears the N-acetylalanine mark. Residues 2-77 (ALLCYNRGCG…KPPEPVKPEV (76 aa)) are interaction with PPP5C. Zn(2+)-binding residues include cysteine 5, cysteine 10, cysteine 24, histidine 27, cysteine 42, and cysteine 43. CHORD domains are found at residues 5–64 (CYNR…KGRH) and 157–216 (CKNG…TGKH). At threonine 47 the chain carries Phosphothreonine. At serine 51 the chain carries Phosphoserine. Positions 59, 64, 157, 162, 176, 179, 194, 195, 211, and 216 each coordinate Zn(2+). Residues 62 to 82 (GRHNSEKPPEPVKPEVKTTEK) form a disordered region. Residues 64 to 82 (HNSEKPPEPVKPEVKTTEK) are compositionally biased toward basic and acidic residues. Residues 65–316 (NSEKPPEPVK…AEPMQWASLE (252 aa)) are interaction with HSP90AA1 and HSP90AB1. The region spanning 227–316 (VVPCRHDWHQ…AEPMQWASLE (90 aa)) is the CS domain.

Interacts with HSP90AA1, HSP90AB1, PPP5C, ROCK1 and ROCK2.

Its function is as follows. Regulates centrosome duplication, probably by inhibiting the kinase activity of ROCK2. Proposed to act as co-chaperone for HSP90. May play a role in the regulation of NOD1 via a HSP90 chaperone complex. In vitro, has intrinsic chaperone activity. This function may be achieved by inhibiting association of ROCK2 with NPM1. Plays a role in ensuring the localization of the tyrosine kinase receptor EGFR to the plasma membrane, and thus ensures the subsequent regulation of EGFR activity and EGF-induced actin cytoskeleton remodeling. Involved in stress response. Prevents tumorigenesis. The protein is Cysteine and histidine-rich domain-containing protein 1 (CHORDC1) of Bos taurus (Bovine).